A 274-amino-acid chain; its full sequence is 2-dehydro-3-deoxyphosphooctonate aldolase (274 aa).

The protein belongs to the KdsA family.

Its subcellular location is the cytoplasm. The catalysed reaction is D-arabinose 5-phosphate + phosphoenolpyruvate + H2O = 3-deoxy-alpha-D-manno-2-octulosonate-8-phosphate + phosphate. The protein operates within carbohydrate biosynthesis; 3-deoxy-D-manno-octulosonate biosynthesis; 3-deoxy-D-manno-octulosonate from D-ribulose 5-phosphate: step 2/3. It participates in bacterial outer membrane biogenesis; lipopolysaccharide biosynthesis. The chain is 2-dehydro-3-deoxyphosphooctonate aldolase from Rickettsia canadensis (strain McKiel).